Here is a 680-residue protein sequence, read N- to C-terminus: Meiotic recombination protein REC8 (680 aa).

2 stretches are compositionally biased toward low complexity: residues 278–290 and 436–446; these read ENDN…GGED and SLVSTQSSSST. Disordered regions lie at residues 278–297, 431–467, and 540–560; these read ENDN…ENEG, RKRA…YSSD, and EQNF…GSQQ. Residues 550 to 560 show a composition bias toward polar residues; it reads SNSCFSDGSQQ.

This sequence belongs to the rad21 family. In terms of processing, proteolytically cleaved by ESP1. Phosphorylated by CDC5. CDC5 phosphorylation is necessary for cleavage by ESP1 and subsequent removal from chromosome arms.

The protein localises to the nucleus. It is found in the chromosome. Its subcellular location is the centromere. Its function is as follows. Replaces the SCC1 mitosis-specific cohesin to ensure sister chromatid cohesion during meiosis. Is cleaved by ESP1 shortly before the first meiotic division, and dissociates from chromatin, allowing sister chromatids to segregate. Is protected from cleavage by SPO13. Promotes localization of the LINC complex subunit MPS3 on nuclear envelope in mitotic cells. This is Meiotic recombination protein REC8 from Saccharomyces cerevisiae (strain ATCC 204508 / S288c) (Baker's yeast).